Consider the following 952-residue polypeptide: Translation initiation factor IF-2 (952 aa).

Disordered stretches follow at residues 74-95, 153-204, 230-256, and 273-319; these read QRRLSRLEEQSRKTYEKERQLK, AAQA…KEEP, MHSPFDRSSEAERKKKNRKKNFKEQAD, and DEKG…DVND. Low complexity predominate over residues 153-168; it reads AAQADQTDQTDQTDQA. Residues 232 to 242 show a composition bias toward basic and acidic residues; it reads SPFDRSSEAER. Residues 286–303 show a composition bias toward low complexity; that stretch reads PGETNAATPAGTASTAGA. Positions 449 to 619 constitute a tr-type G domain; that stretch reads IRPPVITIMG…LAEAEIRELK (171 aa). The G1 stretch occupies residues 458-465; that stretch reads GHVDHGKT. 458–465 provides a ligand contact to GTP; sequence GHVDHGKT. The segment at 483 to 487 is G2; that stretch reads GITQH. The tract at residues 505–508 is G3; the sequence is DTPG. GTP contacts are provided by residues 505–509 and 559–562; these read DTPGH and NKVD. The G4 stretch occupies residues 559-562; it reads NKVD. A G5 region spans residues 595–597; the sequence is SAK.

The protein belongs to the TRAFAC class translation factor GTPase superfamily. Classic translation factor GTPase family. IF-2 subfamily.

The protein resides in the cytoplasm. In terms of biological role, one of the essential components for the initiation of protein synthesis. Protects formylmethionyl-tRNA from spontaneous hydrolysis and promotes its binding to the 30S ribosomal subunits. Also involved in the hydrolysis of GTP during the formation of the 70S ribosomal complex. This is Translation initiation factor IF-2 from Chlorobium limicola (strain DSM 245 / NBRC 103803 / 6330).